Reading from the N-terminus, the 211-residue chain is Thiamine-phosphate synthase (211 aa).

Residues 37 to 41 (QLRIK) and Asn69 each bind 4-amino-2-methyl-5-(diphosphooxymethyl)pyrimidine. The Mg(2+) site is built by Asp70 and Asp89. A 4-amino-2-methyl-5-(diphosphooxymethyl)pyrimidine-binding site is contributed by Ser108. A 2-[(2R,5Z)-2-carboxy-4-methylthiazol-5(2H)-ylidene]ethyl phosphate-binding site is contributed by 134–136 (TQT). Lys137 contacts 4-amino-2-methyl-5-(diphosphooxymethyl)pyrimidine. 2-[(2R,5Z)-2-carboxy-4-methylthiazol-5(2H)-ylidene]ethyl phosphate-binding positions include Gly166 and 186–187 (VS).

The protein belongs to the thiamine-phosphate synthase family. It depends on Mg(2+) as a cofactor.

The enzyme catalyses 2-[(2R,5Z)-2-carboxy-4-methylthiazol-5(2H)-ylidene]ethyl phosphate + 4-amino-2-methyl-5-(diphosphooxymethyl)pyrimidine + 2 H(+) = thiamine phosphate + CO2 + diphosphate. The catalysed reaction is 2-(2-carboxy-4-methylthiazol-5-yl)ethyl phosphate + 4-amino-2-methyl-5-(diphosphooxymethyl)pyrimidine + 2 H(+) = thiamine phosphate + CO2 + diphosphate. It catalyses the reaction 4-methyl-5-(2-phosphooxyethyl)-thiazole + 4-amino-2-methyl-5-(diphosphooxymethyl)pyrimidine + H(+) = thiamine phosphate + diphosphate. It functions in the pathway cofactor biosynthesis; thiamine diphosphate biosynthesis; thiamine phosphate from 4-amino-2-methyl-5-diphosphomethylpyrimidine and 4-methyl-5-(2-phosphoethyl)-thiazole: step 1/1. In terms of biological role, condenses 4-methyl-5-(beta-hydroxyethyl)thiazole monophosphate (THZ-P) and 2-methyl-4-amino-5-hydroxymethyl pyrimidine pyrophosphate (HMP-PP) to form thiamine monophosphate (TMP). The chain is Thiamine-phosphate synthase from Escherichia coli O157:H7.